A 293-amino-acid polypeptide reads, in one-letter code: Cell adhesion molecule CEACAM21 (293 aa).

The N-terminal stretch at M1–A34 is a signal peptide. Residues W35–G240 are Extracellular-facing. N-linked (GlcNAc...) asparagine glycosylation occurs at N111. The Ig-like C2-type domain occupies P147–T231. A disulfide bridge links C166 with C214. A helical transmembrane segment spans residues I241 to L261. The Cytoplasmic portion of the chain corresponds to R262 to S293. The disordered stretch occupies residues A267–S293.

Belongs to the immunoglobulin superfamily. CEA family.

The protein resides in the membrane. The polypeptide is Cell adhesion molecule CEACAM21 (Homo sapiens (Human)).